We begin with the raw amino-acid sequence, 71 residues long: Transcription modulator YdgT (71 aa).

Belongs to the Hha/YmoA/Cnu family. In terms of assembly, forms complexes with both H-NS and StpA.

Its function is as follows. Binds to H-NS and modified the range of genes it silences; H-NS alonge silences core gene while the H-NS-Hha complex (and presumably also H-NS-YdgT) silences genes acquired by horizontal gene transfer. Plays a role silencing virulence factors in the absence of factors that induce pathogenicity. The complex formed with H-NS binds to the specific 26-bp cnb site in the origin of replication oriC. This Salmonella choleraesuis (strain SC-B67) protein is Transcription modulator YdgT (ydgT).